The primary structure comprises 104 residues: Protein U9 (104 aa).

A helical transmembrane segment spans residues Gly37–Lys54.

The protein localises to the host membrane. This Human herpesvirus 6B (HHV-6 variant B) protein is Protein U9 (U9).